A 583-amino-acid polypeptide reads, in one-letter code: CD166 antigen (583 aa).

A signal peptide spans 1–27 (MASKVSPSCRLVFCLLISAAVLRPGLG). Ig-like V-type domains lie at 28–120 (WYTV…TEDN) and 125–234 (PTLV…KTIY). Residues 28–527 (WYTVNSAYGD…NREKVNDQAK (500 aa)) lie on the Extracellular side of the membrane. 2 disulfide bridges follow: cysteine 43–cysteine 113 and cysteine 157–cysteine 220. Asparagine 95, asparagine 167, asparagine 265, asparagine 306, asparagine 361, asparagine 457, asparagine 480, and asparagine 499 each carry an N-linked (GlcNAc...) asparagine glycan. Ig-like C2-type domains follow at residues 245 to 328 (PTEQ…TTIT), 333 to 409 (DLSL…ESLT), and 416 to 501 (PQIK…LNVS). 3 cysteine pairs are disulfide-bonded: cysteine 270–cysteine 313, cysteine 354–cysteine 392, and cysteine 435–cysteine 485. Residues 528-549 (LIVGIVVGLLLAALVAGVVYWL) form a helical membrane-spanning segment. The Cytoplasmic segment spans residues 550 to 583 (YMKKSKTASKHVNKDLGNMEENKKLEENNHKTEA). Positions 562-583 (NKDLGNMEENKKLEENNHKTEA) are disordered. The span at 569 to 583 (EENKKLEENNHKTEA) shows a compositional bias: basic and acidic residues.

As to quaternary structure, homodimer. Interacts (via extracellular domain) with CD6 (via extracellular domain). Homodimerization and interaction with CD6 involve the same region and cannot occur simultaneously. The affinity for CD6 is much higher than the affinity for self-association. Interacts (via glycosylated extracellular domain) with LGALS1 and LGALS3. Interaction with LGALS1 or LGALS3 inhibits interaction with CD6. In terms of processing, glycosylated. In terms of tissue distribution, detected on brain motor neurons, in differentiating retinal ganglion cells and in adult retina. Detected on leukocytes and on lymphatic endothelial cells. Detected in spleen B cells and T-cells (at protein level). Detected in adult brain and embryonic spinal cord. Expressed at high levels in the brain, and lung, and at lower levels in the liver, and the kidney, as well as by activated leukocytes.

It localises to the cell membrane. The protein localises to the cell projection. It is found in the axon. The protein resides in the dendrite. In terms of biological role, cell adhesion molecule that mediates both heterotypic cell-cell contacts via its interaction with CD6, as well as homotypic cell-cell contacts. Promotes T-cell activation and proliferation via its interactions with CD6. Contributes to the formation and maturation of the immunological synapse via its interactions with CD6. Mediates homotypic interactions with cells that express ALCAM. Mediates attachment of dendritic cells onto endothelial cells via homotypic interaction. Inhibits endothelial cell migration and promotes endothelial tube formation via homotypic interactions. Required for normal organization of the lymph vessel network. Required for normal hematopoietic stem cell engraftment in the bone marrow. Plays a role in hematopoiesis; required for normal numbers of hematopoietic stem cells in bone marrow. Promotes in vitro osteoblast proliferation and differentiation. Promotes neurite extension, axon growth and axon guidance; axons grow preferentially on surfaces that contain ALCAM. Mediates outgrowth and pathfinding for retinal ganglion cell axons. The chain is CD166 antigen (Alcam) from Mus musculus (Mouse).